Here is a 339-residue protein sequence, read N- to C-terminus: Cathepsin L (339 aa).

An N-terminal signal peptide occupies residues 1 to 17 (MRTVLVALLALVALTQA). Residues 18–121 (ISPLDLIKEE…ATYIPPAHVT (104 aa)) constitute a propeptide, activation peptide. N-linked (GlcNAc...) asparagine glycosylation occurs at N96. Cystine bridges form between C143/C186, C177/C219, and C278/C328. The active site involves C146. Residue H285 is part of the active site. A propeptide spanning residues 295 to 298 (DESG) is cleaved from the precursor. N306 is a catalytic residue.

Belongs to the peptidase C1 family. As to quaternary structure, dimer of a heavy and a light chain linked by disulfide bonds.

The protein localises to the lysosome. The enzyme catalyses Specificity close to that of papain. As compared to cathepsin B, cathepsin L exhibits higher activity toward protein substrates, but has little activity on Z-Arg-Arg-NHMec, and no peptidyl-dipeptidase activity.. Important for the overall degradation of proteins in lysosomes. Required for differentiation of imaginal disks. This Sarcophaga peregrina (Flesh fly) protein is Cathepsin L.